Consider the following 216-residue polypeptide: Probable nicotinate-nucleotide adenylyltransferase (216 aa).

The protein belongs to the NadD family.

The enzyme catalyses nicotinate beta-D-ribonucleotide + ATP + H(+) = deamido-NAD(+) + diphosphate. Its pathway is cofactor biosynthesis; NAD(+) biosynthesis; deamido-NAD(+) from nicotinate D-ribonucleotide: step 1/1. Its function is as follows. Catalyzes the reversible adenylation of nicotinate mononucleotide (NaMN) to nicotinic acid adenine dinucleotide (NaAD). This is Probable nicotinate-nucleotide adenylyltransferase from Maridesulfovibrio salexigens (strain ATCC 14822 / DSM 2638 / NCIMB 8403 / VKM B-1763) (Desulfovibrio salexigens).